The sequence spans 1377 residues: DNA-directed RNA polymerase subunit beta (1377 aa).

Belongs to the RNA polymerase beta chain family. The RNAP catalytic core consists of 2 alpha, 1 beta, 1 beta' and 1 omega subunit. When a sigma factor is associated with the core the holoenzyme is formed, which can initiate transcription.

The catalysed reaction is RNA(n) + a ribonucleoside 5'-triphosphate = RNA(n+1) + diphosphate. Its function is as follows. DNA-dependent RNA polymerase catalyzes the transcription of DNA into RNA using the four ribonucleoside triphosphates as substrates. This Orientia tsutsugamushi (strain Boryong) (Rickettsia tsutsugamushi) protein is DNA-directed RNA polymerase subunit beta.